We begin with the raw amino-acid sequence, 335 residues long: Ubiquinone biosynthesis protein COQ4, mitochondrial (335 aa).

A mitochondrion-targeting transit peptide spans 1–10 (MLRLSLLRST). Zn(2+)-binding residues include His-210, Asp-211, His-214, and Glu-226.

It belongs to the COQ4 family. In terms of assembly, component of a multi-subunit COQ enzyme complex, composed of at least COQ3, COQ4, COQ5, COQ6, COQ7 and COQ9. Interacts with COQ3. Requires Zn(2+) as cofactor.

The protein resides in the mitochondrion inner membrane. It carries out the reaction 4-hydroxy-3-methoxy-5-(all-trans-hexaprenyl)benzoate + H(+) = 2-methoxy-6-(all-trans-hexaprenyl)phenol + CO2. Its pathway is cofactor biosynthesis; ubiquinone biosynthesis. In terms of biological role, lyase that catalyzes the C1-decarboxylation of 4-hydroxy-3-methoxy-5-(all-trans-hexaprenyl)benzoic acid into 2-methoxy-6-(all-trans-hexaprenyl)phenol during ubiquinone biosynthesis. The sequence is that of Ubiquinone biosynthesis protein COQ4, mitochondrial from Saccharomyces cerevisiae (strain YJM789) (Baker's yeast).